Reading from the N-terminus, the 253-residue chain is Phosphate import ATP-binding protein PstB (253 aa).

The ABC transporter domain maps to 5–248 (IETVNLNVYY…PEHELTEKYV (244 aa)). 37–44 (GPSGCGKS) lines the ATP pocket.

The protein belongs to the ABC transporter superfamily. Phosphate importer (TC 3.A.1.7) family. As to quaternary structure, the complex is composed of two ATP-binding proteins (PstB), two transmembrane proteins (PstC and PstA) and a solute-binding protein (PstS).

The protein localises to the cell membrane. The catalysed reaction is phosphate(out) + ATP + H2O = ADP + 2 phosphate(in) + H(+). Part of the ABC transporter complex PstSACB involved in phosphate import. Responsible for energy coupling to the transport system. The sequence is that of Phosphate import ATP-binding protein PstB from Thermococcus kodakarensis (strain ATCC BAA-918 / JCM 12380 / KOD1) (Pyrococcus kodakaraensis (strain KOD1)).